Here is a 224-residue protein sequence, read N- to C-terminus: MQPPAFYVTGTDTGIGKTMGSTALLHALRARGHTAVGMKPVASGCERTPQGWRNEDALALQAASNPQPAYATLNPYALPAPLAPELAAADVGVTLSLEPITQAFAQLRAQAEVVVVEGVGGWAAPLSATLDQADLVRALQLPVVLVVGVRLGCINHARLTAAAIAADGLQCIGWIANEVDPQMERVEENIGMLRQRLAMPCWGRIPWRPDAEAAAQAQGLQLPR.

Position 18 (Thr-18) interacts with Mg(2+). The active site involves Lys-39. Substrate is bound at residue Ser-43. Residues Asp-56 and Glu-117 each coordinate Mg(2+). ATP is bound by residues Asp-56, 117 to 120 (EGVG), and 177 to 178 (NE).

Belongs to the dethiobiotin synthetase family. In terms of assembly, homodimer. Requires Mg(2+) as cofactor.

It localises to the cytoplasm. It carries out the reaction (7R,8S)-7,8-diammoniononanoate + CO2 + ATP = (4R,5S)-dethiobiotin + ADP + phosphate + 3 H(+). It functions in the pathway cofactor biosynthesis; biotin biosynthesis; biotin from 7,8-diaminononanoate: step 1/2. Its function is as follows. Catalyzes a mechanistically unusual reaction, the ATP-dependent insertion of CO2 between the N7 and N8 nitrogen atoms of 7,8-diaminopelargonic acid (DAPA, also called 7,8-diammoniononanoate) to form a ureido ring. This Xanthomonas oryzae pv. oryzae (strain MAFF 311018) protein is ATP-dependent dethiobiotin synthetase BioD.